The chain runs to 390 residues: Cell division protein FtsZ (390 aa).

GTP contacts are provided by residues G20 to N24, G106 to G108, E137, R141, and D184.

Belongs to the FtsZ family. In terms of assembly, homodimer. Polymerizes to form a dynamic ring structure in a strictly GTP-dependent manner. Interacts directly with several other division proteins.

The protein localises to the cytoplasm. Essential cell division protein that forms a contractile ring structure (Z ring) at the future cell division site. The regulation of the ring assembly controls the timing and the location of cell division. One of the functions of the FtsZ ring is to recruit other cell division proteins to the septum to produce a new cell wall between the dividing cells. Binds GTP and shows GTPase activity. The protein is Cell division protein FtsZ of Mycoplasmopsis pulmonis (strain UAB CTIP) (Mycoplasma pulmonis).